Reading from the N-terminus, the 364-residue chain is Membrane-bound lytic murein transglycosylase C (364 aa).

The N-terminal stretch at 1-19 is a signal peptide; the sequence is MNKYKKFLPLLVLIPFLAS. The N-palmitoyl cysteine moiety is linked to residue cysteine 20. Cysteine 20 carries S-diacylglycerol cysteine lipidation.

It belongs to the transglycosylase Slt family.

Its subcellular location is the cell outer membrane. The catalysed reaction is Exolytic cleavage of the (1-&gt;4)-beta-glycosidic linkage between N-acetylmuramic acid (MurNAc) and N-acetylglucosamine (GlcNAc) residues in peptidoglycan, from either the reducing or the non-reducing ends of the peptidoglycan chains, with concomitant formation of a 1,6-anhydrobond in the MurNAc residue.. Murein-degrading enzyme. May play a role in recycling of muropeptides during cell elongation and/or cell division. This is Membrane-bound lytic murein transglycosylase C from Glaesserella parasuis serovar 5 (strain SH0165) (Haemophilus parasuis).